The chain runs to 326 residues: Ras association domain-containing protein 2 (326 aa).

In terms of domain architecture, Ras-associating spans 176-264; sequence YNHKTSVFTP…SKVFLMEKDQ (89 aa). Residues 272–319 form the SARAH domain; it reads VAQYIKFEMPVLKSFIQKLQEEEDREVEKLMQKYTVLRLMIRQRLEEI.

As to quaternary structure, interacts directly with activated KRAS in a GTP-dependent manner. Interacts (via SARAH domain) with STK3/MST2 and STK4/MST1. Post-translationally, phosphorylated by STK3/MST2 and STK4/MST1.

It localises to the nucleus. It is found in the cytoplasm. The protein localises to the chromosome. Its subcellular location is the centromere. The protein resides in the kinetochore. Its function is as follows. Potential tumor suppressor. Acts as a KRAS-specific effector protein. May promote apoptosis and cell cycle arrest. Stabilizes STK3/MST2 by protecting it from proteasomal degradation. The polypeptide is Ras association domain-containing protein 2 (Rassf2) (Rattus norvegicus (Rat)).